The following is a 309-amino-acid chain: ATP-dependent Clp protease proteolytic subunit 3, chloroplastic (309 aa).

The transit peptide at 1–70 directs the protein to the chloroplast; the sequence is MEMSLRLASS…WDVSSFSIDS (70 aa). Val71 is modified (N-acetylvaline). The active-site Nucleophile is the Ser164. The active site involves His189. A Phosphothreonine modification is found at Thr194. Positions 290–309 are disordered; the sequence is DNTNLPSERSMTQNGYAAIE. Residues 292-309 are compositionally biased toward polar residues; that stretch reads TNLPSERSMTQNGYAAIE.

The protein belongs to the peptidase S14 family. Component of the chloroplastic Clp protease core complex which consist of at least 16 proteins: CLPP4 (3 copies), CLPP5 (3 copies), CLPR4 (2 copies), ClpP1 (1 copy), CLPP6 (1 copy), CLPR2 (1 copy), CLPT1 (1 copy), CLPT2 (1 copy) and 3 copies of CLPP3 and/or CLPR1 and/or CLPR3. The core complex is organized in two heptameric rings, one containing CLPP3,4,5,6 in a 1:2:3:1 ratio and the other CLPP1 and CLPR1,2,3,4 in a 3:1:1:1:1 ratio. Interacts with CHIP. Ubiquitinated in vitro by CHIP. In terms of tissue distribution, mostly expressed in leaves. Also detected in stems, and to a lower extent, in roots (at protein level).

Its subcellular location is the plastid. The protein localises to the chloroplast stroma. It carries out the reaction Hydrolysis of proteins to small peptides in the presence of ATP and magnesium. alpha-casein is the usual test substrate. In the absence of ATP, only oligopeptides shorter than five residues are hydrolyzed (such as succinyl-Leu-Tyr-|-NHMec, and Leu-Tyr-Leu-|-Tyr-Trp, in which cleavage of the -Tyr-|-Leu- and -Tyr-|-Trp bonds also occurs).. Functionally, cleaves peptides in various proteins in a process that requires ATP hydrolysis. Has a chymotrypsin-like activity. Plays a major role in the degradation of misfolded proteins. In the absence of CLPP3, modified ClpPR core(s) could be formed, albeit at strongly reduced levels. This Arabidopsis thaliana (Mouse-ear cress) protein is ATP-dependent Clp protease proteolytic subunit 3, chloroplastic.